Consider the following 155-residue polypeptide: uncharacterized protein (155 aa).

This is an uncharacterized protein from Methanocaldococcus jannaschii (strain ATCC 43067 / DSM 2661 / JAL-1 / JCM 10045 / NBRC 100440) (Methanococcus jannaschii).